A 99-amino-acid chain; its full sequence is Single insulin-like growth factor-binding domain protein-2 (99 aa).

The signal sequence occupies residues 1-18 (MESLFIFAFGMMLSSASA). In terms of domain architecture, IGFBP N-terminal spans 19–98 (LSCIPCVPEE…GQEVGRCRKK (80 aa)). The O-linked (GalNAc...) serine glycan is linked to serine 20. 6 cysteine pairs are disulfide-bonded: cysteine 21–cysteine 44, cysteine 24–cysteine 46, cysteine 29–cysteine 47, cysteine 35–cysteine 50, cysteine 58–cysteine 74, and cysteine 68–cysteine 95.

In terms of tissue distribution, expressed in hemocytes.

Its subcellular location is the secreted. Its function is as follows. Has a role in the innate immune system. This is Single insulin-like growth factor-binding domain protein-2 from Cupiennius salei (American wandering spider).